The sequence spans 96 residues: Nucleoid-associated protein CF0672 (96 aa).

The protein belongs to the YbaB/EbfC family. Homodimer.

Its subcellular location is the cytoplasm. It localises to the nucleoid. In terms of biological role, binds to DNA and alters its conformation. May be involved in regulation of gene expression, nucleoid organization and DNA protection. This Chlamydia felis (strain Fe/C-56) (Chlamydophila felis) protein is Nucleoid-associated protein CF0672.